The chain runs to 679 residues: MHDKKSPMANSHYLKNLKQQFRNKNLIETTIHLVKCNDHDSLAFLARTYGVPPQLRHVVWPILLKYHPMCISPNITSNTISWDPITNDFILNDPFLKSKAPTDKQDKSDDENILPYDIESIILHDLKKYFHSRSNPAGSSSNANTTNIATPTPVSSSDASTISSMEVLSPSLDYEFQIIETLKNAIVKFLLKWSKIFKYENGLAWIALGLAEWYPIYPYETMSPFNETHSFYEVEDYVVLSGRKHALLSTNNGNNGNSNSSSNNTNNNNTNITSGMHNLSINTNTSLHNSPYISHTLSYLYKEYPLPFELRSKLPTKPIFSFSALFERLALVILHCPDTILAHKQLKNDSNASSSSKANSNFNTNYFPIISGGDLSFQTQVFFKVFSSILPELYQPLTEESSLQPSSSRNSWIYWWLKCSGAKALQRQDRGRVWDLLLGWRPKPNMDTINFFLNYNDKKMDHLYHDTPQCDNEQYWMKDWIALYNNDPFWFPDLDSMALGSKKFPYDYSVFKELILRNRYGGTQSKAQKDNTVPSPGSDSNDKSELKLPFSSIDPHMQLIFIFIAILQFNEFKLLEFEEAEISEFLNNVPLLTKFDDSSYRKLYENTESSITSLPSSPTTSTMASLQSSSNSSAHISNYHMLIEVGNDAKASHCFDDLLNMAGDIWRKWLWRELEESSL.

The Rab-GAP TBC domain occupies 50–441 (GVPPQLRHVV…RVWDLLLGWR (392 aa)). Residues 135–153 (NPAGSSSNANTTNIATPTP) are compositionally biased toward low complexity. 3 disordered regions span residues 135–159 (NPAG…SSDA), 250–270 (TNNG…NNNT), and 524–544 (QSKA…NDKS). A compositionally biased stretch (polar residues) spans 524–539 (QSKAQKDNTVPSPGSD).

It belongs to the OCA5 family.

It localises to the cytoplasm. Its function is as follows. Required for replication of brome mosaic virus (BMV), a positive-strand RNA virus. The protein is Oxidant-induced cell-cycle arrest protein 5 (OCA5) of Saccharomyces cerevisiae (strain JAY291) (Baker's yeast).